We begin with the raw amino-acid sequence, 183 residues long: Large ribosomal subunit protein eL18 (183 aa).

Residues 150 to 183 (RHFGPAPGAPRSHTKPYVRTKGHEKARPSRRANV) form a disordered region.

This sequence belongs to the eukaryotic ribosomal protein eL18 family.

The protein resides in the cytoplasm. The sequence is that of Large ribosomal subunit protein eL18 (RpL18) from Bombyx mori (Silk moth).